A 75-amino-acid chain; its full sequence is Exodeoxyribonuclease 7 small subunit (75 aa).

The protein belongs to the XseB family. In terms of assembly, heterooligomer composed of large and small subunits.

It localises to the cytoplasm. The catalysed reaction is Exonucleolytic cleavage in either 5'- to 3'- or 3'- to 5'-direction to yield nucleoside 5'-phosphates.. In terms of biological role, bidirectionally degrades single-stranded DNA into large acid-insoluble oligonucleotides, which are then degraded further into small acid-soluble oligonucleotides. This Thermoanaerobacter sp. (strain X514) protein is Exodeoxyribonuclease 7 small subunit.